The sequence spans 231 residues: LexA repressor (231 aa).

Positions 1 to 24 (MTDRKEHKMKPGRRPTEGMTPSQE) are disordered. Residues 43 to 62 (VKEIAEALGMKTPSAHEQVQ) constitute a DNA-binding region (H-T-H motif). Active-site for autocatalytic cleavage activity residues include Ser146 and Lys183.

It belongs to the peptidase S24 family. In terms of assembly, homodimer.

The catalysed reaction is Hydrolysis of Ala-|-Gly bond in repressor LexA.. Its function is as follows. Represses a number of genes involved in the response to DNA damage (SOS response), including recA and lexA. In the presence of single-stranded DNA, RecA interacts with LexA causing an autocatalytic cleavage which disrupts the DNA-binding part of LexA, leading to derepression of the SOS regulon and eventually DNA repair. This is LexA repressor from Magnetococcus marinus (strain ATCC BAA-1437 / JCM 17883 / MC-1).